The sequence spans 915 residues: Hexokinase HKDC1 (915 aa).

The tract at residues 1-20 (MFAVHLVAFYFTKLKEDQIK) is mitochondrial-binding peptide (MBP). Hexokinase domains lie at 16–458 (EDQI…MVTA) and 464–903 (QAQR…LITA). ATP-binding positions include arginine 30 and 84–89 (DLGGSK). A hexokinase small subdomain 1 region spans residues 73–207 (DGSENGEFLS…DLDVDILALV (135 aa)). Position 84 to 91 (84 to 91 (DLGGSKFR)) interacts with D-glucose 6-phosphate. D-glucose contacts are provided by residues serine 155, 172-173 (TK), and 208-209 (ND). The segment at 208–447 (NDTVGTMMTC…CDVRFLLSES (240 aa)) is hexokinase large subdomain 1. The D-glucose 6-phosphate site is built by aspartate 209 and threonine 232. D-glucose contacts are provided by residues asparagine 235, glutamate 260, and 291 to 294 (QLFE). Residue 413–415 (DGT) coordinates D-glucose 6-phosphate. 425–426 (KR) serves as a coordination point for ATP. D-glucose 6-phosphate-binding positions include serine 449 and 532–536 (DLGGT). Residues 521–652 (DGTEKGKFLA…EFDLDIVAIV (132 aa)) form a hexokinase small subdomain 2 region. 532–537 (DLGGTN) provides a ligand contact to ATP. Residues 600–601 (SF), 617–618 (TK), and 653–654 (ND) contribute to the D-glucose site. Residues 653-892 (NDTVGTMMTC…CDVTFMLSED (240 aa)) are hexokinase large subdomain 2. D-glucose 6-phosphate is bound by residues aspartate 654 and threonine 677. Threonine 677 contacts ATP. Residues 679 to 680 (SN), glutamate 705, and glutamate 739 contribute to the D-glucose site. ATP contacts are provided by residues 744 to 745 (GM), 781 to 785 (TKFLS), and 860 to 864 (TLYKL). D-glucose 6-phosphate-binding positions include 858–860 (DGT) and serine 894.

It belongs to the hexokinase family. As to expression, widely expressed. Detected in retina, brain, cerebellum, liver, lung, kidney, spleen, pancreas and intestine.

Its subcellular location is the cytoplasm. The protein localises to the mitochondrion membrane. The protein resides in the photoreceptor inner segment. It carries out the reaction a D-hexose + ATP = a D-hexose 6-phosphate + ADP + H(+). The enzyme catalyses D-glucose + ATP = D-glucose 6-phosphate + ADP + H(+). It functions in the pathway carbohydrate metabolism; hexose metabolism. Its pathway is carbohydrate degradation; glycolysis; D-glyceraldehyde 3-phosphate and glycerone phosphate from D-glucose: step 1/4. Functionally, catalyzes the phosphorylation of hexose to hexose 6-phosphate, although at very low level compared to other hexokinases. Has low glucose phosphorylating activity compared to other hexokinases. Involved in glucose homeostasis and hepatic lipid accumulation. Required to maintain whole-body glucose homeostasis during pregnancy; however additional evidences are required to confirm this role. This Mus musculus (Mouse) protein is Hexokinase HKDC1.